We begin with the raw amino-acid sequence, 126 residues long: Large ribosomal subunit protein bL12 (126 aa).

It belongs to the bacterial ribosomal protein bL12 family. Homodimer. Part of the ribosomal stalk of the 50S ribosomal subunit. Forms a multimeric L10(L12)X complex, where L10 forms an elongated spine to which 2 to 4 L12 dimers bind in a sequential fashion. Binds GTP-bound translation factors.

Functionally, forms part of the ribosomal stalk which helps the ribosome interact with GTP-bound translation factors. Is thus essential for accurate translation. This is Large ribosomal subunit protein bL12 from Saccharophagus degradans (strain 2-40 / ATCC 43961 / DSM 17024).